A 757-amino-acid polypeptide reads, in one-letter code: Polyribonucleotide nucleotidyltransferase (757 aa).

Positions 531 and 537 each coordinate Mg(2+). The KH domain occupies 597 to 656 (PRVTTIRVPVDKIGEVIGPKGKIINAITEETGAQISIEDDGTVFVGATDGPSAQAAIDRI). The S1 motif domain occupies 668-737 (GERFLGTVVK…KRGKISLVLV (70 aa)).

This sequence belongs to the polyribonucleotide nucleotidyltransferase family. It depends on Mg(2+) as a cofactor.

It is found in the cytoplasm. The catalysed reaction is RNA(n+1) + phosphate = RNA(n) + a ribonucleoside 5'-diphosphate. In terms of biological role, involved in mRNA degradation. Catalyzes the phosphorolysis of single-stranded polyribonucleotides processively in the 3'- to 5'-direction. The polypeptide is Polyribonucleotide nucleotidyltransferase (Mycolicibacterium paratuberculosis (strain ATCC BAA-968 / K-10) (Mycobacterium paratuberculosis)).